A 293-amino-acid chain; its full sequence is Deubiquitinase OTUD6B (293 aa).

Disordered stretches follow at residues 1–43 and 57–114; these read MEEV…RRKQ and QKHE…LEKE. The OTU domain maps to 147-284; sequence LQIKEISSDG…GEHYNSVEPL (138 aa). Residues 152–158 are cys-loop; that stretch reads ISSDGHC. Residue aspartate 155 is part of the active site. Cysteine 158 serves as the catalytic Nucleophile. Residues 219-229 form a variable-loop region; it reads VADTAAWGGQL. The tract at residues 267–277 is his-loop; the sequence is YMRHAYGLGEH. The active site involves histidine 277.

It catalyses the reaction Thiol-dependent hydrolysis of ester, thioester, amide, peptide and isopeptide bonds formed by the C-terminal Gly of ubiquitin (a 76-residue protein attached to proteins as an intracellular targeting signal).. Functionally, deubiquitinating enzyme that may play a role in the ubiquitin-dependent regulation of different cellular processes. The sequence is that of Deubiquitinase OTUD6B (otud6b) from Danio rerio (Zebrafish).